The chain runs to 183 residues: Acireductone dioxygenase (183 aa).

4 residues coordinate Fe(2+): His-99, His-101, Glu-105, and His-144. The Ni(2+) site is built by His-99, His-101, Glu-105, and His-144.

The protein belongs to the acireductone dioxygenase (ARD) family. As to quaternary structure, monomer. Requires Fe(2+) as cofactor. Ni(2+) is required as a cofactor.

It carries out the reaction 1,2-dihydroxy-5-(methylsulfanyl)pent-1-en-3-one + O2 = 3-(methylsulfanyl)propanoate + CO + formate + 2 H(+). The enzyme catalyses 1,2-dihydroxy-5-(methylsulfanyl)pent-1-en-3-one + O2 = 4-methylsulfanyl-2-oxobutanoate + formate + 2 H(+). The protein operates within amino-acid biosynthesis; L-methionine biosynthesis via salvage pathway; L-methionine from S-methyl-5-thio-alpha-D-ribose 1-phosphate: step 5/6. Its function is as follows. Catalyzes 2 different reactions between oxygen and the acireductone 1,2-dihydroxy-3-keto-5-methylthiopentene (DHK-MTPene) depending upon the metal bound in the active site. Fe-containing acireductone dioxygenase (Fe-ARD) produces formate and 2-keto-4-methylthiobutyrate (KMTB), the alpha-ketoacid precursor of methionine in the methionine recycle pathway. Ni-containing acireductone dioxygenase (Ni-ARD) produces methylthiopropionate, carbon monoxide and formate, and does not lie on the methionine recycle pathway. The polypeptide is Acireductone dioxygenase (Microcystis aeruginosa).